Consider the following 337-residue polypeptide: Probable poly [ADP-ribose] polymerase DDB_G0278045 (337 aa).

In terms of domain architecture, PARP catalytic spans 21–231 (KKWDIIYKQR…NNNKNKNKNN (211 aa)). Residues 218–242 (NNTNNNNKNKNKNNNKNNNKNIKIQ) show a composition bias toward low complexity. Residues 218–247 (NNTNNNNKNKNKNNNKNNNKNIKIQNENKN) form a disordered region.

The enzyme catalyses L-aspartyl-[protein] + NAD(+) = 4-O-(ADP-D-ribosyl)-L-aspartyl-[protein] + nicotinamide. It carries out the reaction L-glutamyl-[protein] + NAD(+) = 5-O-(ADP-D-ribosyl)-L-glutamyl-[protein] + nicotinamide. It catalyses the reaction NAD(+) + (ADP-D-ribosyl)n-acceptor = nicotinamide + (ADP-D-ribosyl)n+1-acceptor + H(+).. This Dictyostelium discoideum (Social amoeba) protein is Probable poly [ADP-ribose] polymerase DDB_G0278045.